The primary structure comprises 1125 residues: Telomerase reverse transcriptase (1125 aa).

The interval 1 to 239 (MPRAPRCPAV…TKRLLSLTST (239 aa)) is RNA-interacting domain 1. Residues 58–205 (VPWGSQPPPA…RPVGGNFTNL (148 aa)) form a GQ motif region. Positions 137-141 (WMLLL) are required for regulating specificity for telomeric DNA and for processivity for primer elongation. Polar residues predominate over residues 206–216 (GSAHQIKNSGH). Residues 206–304 (GSAHQIKNSG…ASDPSLSGSV (99 aa)) are disordered. The segment at 240–328 (NVPSAKKARF…PPQDAEKLRP (89 aa)) is linker. The span at 247 to 259 (ARFEPALRVDKGP) shows a compositional bias: basic and acidic residues. A compositionally biased stretch (low complexity) spans 273-287 (APSPAASPKVPPAAK). Residues 306–528 (CKHKPSSSSL…VPAAEHRLRE (223 aa)) are required for oligomerization. The segment at 329 to 540 (FTETRHFLYS…LAMFLFWLMD (212 aa)) is RNA-interacting domain 2. The short motif at 332–337 (TRHFLY) is the TFLY; involved in RNA binding element. Positions 381–511 (FCRTRRLPRR…VKVEDCHWLR (131 aa)) are QFP motif. Residues 402–422 (LMNHAKCQYVRFLRSHCRFRT) are CP motif. Phosphoserine; by DYRK2 is present on serine 447. Residues 595-928 (EVKHHQDTWL…CLFPWCGLLL (334 aa)) enclose the Reverse transcriptase domain. Tyrosine 697 carries the phosphotyrosine; by SRC-type Tyr-kinases modification. Mg(2+) contacts are provided by aspartate 702, aspartate 861, and aspartate 862. Positions 907 to 921 (LGGAAPHQLPAHCLF) are required for oligomerization. Positions 923 to 927 (WCGLL) are primer grip sequence. A CTE region spans residues 929-1125 (DTRTLEVFCD…LSTDFQTILD (197 aa)).

It belongs to the reverse transcriptase family. Telomerase subfamily. Catalytic component of the telomerase holoenzyme complex composed of one molecule of TERT, one molecule of WRAP53/TCAB1, two molecules of H/ACA ribonucleoprotein complex subunits DKC1, NOP10, NHP2 and GAR1, and a telomerase RNA template component (TERC). The telomerase holoenzyme complex is associated with TEP1, SMG6/EST1A and POT1. The molecular chaperone HSP90/P23 complex is required for correct assembly and stabilization of the active telomerase. Interacts directly with HSP90A and PTGES3. Interacts with HSPA1A; the interaction occurs in the absence of TERC and dissociates once the complex has formed. Interacts with RAN; the interaction promotes nuclear export of TERT. Interacts with XPO1. Interacts with PTPN11; the interaction retains TERT in the nucleus. Interacts with NCL (via RRM1 and C-terminal RRM4/Arg/Gly-rich domains); the interaction is important for nucleolar localization of TERT. Interacts with SMARCA4 (via the bromodomain); the interaction regulates Wnt-mediated signaling. Interacts with MCRS1 (isoform MCRS2); the interaction inhibits in vitro telomerase activity. Interacts with PIF1; the interaction has no effect on the elongation activity of TERT. Interacts with PML; the interaction recruits TERT to PML bodies and inhibits telomerase activity. Interacts with GNL3L. Interacts with isoform 1 and isoform 2 of NVL. Interacts with DHX36. Interacts with ATF7. Post-translationally, phosphorylation at Tyr-697 under oxidative stress leads to translocation of TERT to the cytoplasm and reduces its antiapoptotic activity. Dephosphorylated by SHP2/PTPN11 leading to nuclear retention. Phosphorylation at the G2/M phase at Ser-447 by DYRK2 promotes ubiquitination by the EDVP complex and degradation. Ubiquitinated by the EDVP complex, a E3 ligase complex following phosphorylation at Ser-447 by DYRK2. Ubiquitinated leads to proteasomal degradation. In terms of tissue distribution, isoform 1 and isoform 2 expressed in thymus, liver, spleen, lung, kidney and testis. High level of inactive isoform 3 in adult hippocampus, low level in heart, cortex and cerebellum.

Its subcellular location is the nucleus. It is found in the nucleolus. The protein resides in the nucleoplasm. The protein localises to the chromosome. It localises to the telomere. Its subcellular location is the cytoplasm. It is found in the PML body. It catalyses the reaction DNA(n) + a 2'-deoxyribonucleoside 5'-triphosphate = DNA(n+1) + diphosphate. Its function is as follows. Telomerase is a ribonucleoprotein enzyme essential for the replication of chromosome termini in most eukaryotes. Active in progenitor and cancer cells. Inactive, or very low activity, in normal somatic cells. Catalytic component of the teleromerase holoenzyme complex whose main activity is the elongation of telomeres by acting as a reverse transcriptase that adds simple sequence repeats to chromosome ends by copying a template sequence within the RNA component of the enzyme. Catalyzes the RNA-dependent extension of 3'-chromosomal termini with the 6-nucleotide telomeric repeat unit, 5'-TTAGGG-3'. The catalytic cycle involves primer binding, primer extension and release of product once the template boundary has been reached or nascent product translocation followed by further extension. More active on substrates containing 2 or 3 telomeric repeats. Telomerase activity is regulated by a number of factors including telomerase complex-associated proteins, chaperones and polypeptide modifiers. Modulates Wnt signaling. Plays important roles in aging and antiapoptosis. The polypeptide is Telomerase reverse transcriptase (Rattus norvegicus (Rat)).